The following is a 190-amino-acid chain: Elongation factor P-like protein (190 aa).

The protein belongs to the elongation factor P family.

In Pectobacterium carotovorum subsp. carotovorum (strain PC1), this protein is Elongation factor P-like protein.